A 332-amino-acid chain; its full sequence is Phosphate acyltransferase (332 aa).

The protein belongs to the PlsX family. Homodimer. Probably interacts with PlsY.

It is found in the cytoplasm. It carries out the reaction a fatty acyl-[ACP] + phosphate = an acyl phosphate + holo-[ACP]. It participates in lipid metabolism; phospholipid metabolism. Functionally, catalyzes the reversible formation of acyl-phosphate (acyl-PO(4)) from acyl-[acyl-carrier-protein] (acyl-ACP). This enzyme utilizes acyl-ACP as fatty acyl donor, but not acyl-CoA. This is Phosphate acyltransferase from Bacillus pumilus (strain SAFR-032).